Here is a 185-residue protein sequence, read N- to C-terminus: MVSAGDFRKGVTFEKDGQPCLVVDFQHVKPGKGAAFVRTKYKNLKTGAIREESFNPSEKFPKAVIDTRQMQYLYNDGELYYFMDQENFEQIPLNYEQVEDAIKFLKENEVATIRFYQGQPFQVEAPNFAELEVTDTEPGIKGDTASNVTKAATVETGAVVQVPLFINTGDKVKIDTRTGEYLSRV.

It belongs to the elongation factor P family.

It localises to the cytoplasm. Its pathway is protein biosynthesis; polypeptide chain elongation. Its function is as follows. Involved in peptide bond synthesis. Stimulates efficient translation and peptide-bond synthesis on native or reconstituted 70S ribosomes in vitro. Probably functions indirectly by altering the affinity of the ribosome for aminoacyl-tRNA, thus increasing their reactivity as acceptors for peptidyl transferase. The sequence is that of Elongation factor P from Clostridioides difficile (strain 630) (Peptoclostridium difficile).